We begin with the raw amino-acid sequence, 142 residues long: Large ribosomal subunit protein uL13 (142 aa).

It belongs to the universal ribosomal protein uL13 family. As to quaternary structure, part of the 50S ribosomal subunit.

Functionally, this protein is one of the early assembly proteins of the 50S ribosomal subunit, although it is not seen to bind rRNA by itself. It is important during the early stages of 50S assembly. This chain is Large ribosomal subunit protein uL13, found in Thermococcus kodakarensis (strain ATCC BAA-918 / JCM 12380 / KOD1) (Pyrococcus kodakaraensis (strain KOD1)).